The sequence spans 71 residues: Small ribosomal subunit protein bS21 (71 aa).

It belongs to the bacterial ribosomal protein bS21 family.

This chain is Small ribosomal subunit protein bS21, found in Blochmanniella floridana.